The primary structure comprises 553 residues: MSSVLKAFERFTIEQELQDRGEEGSIPPETLKSAVKVFVINTPNPTTRYQMLNFCLRIICSQNRRASHRVGALIALFSLPSAGMQNHIRLADRSPEAQIERCEIDGFEPGTYRLIPNARANLTANEIAAYALLADDLPPTINNGTPYVHADVELQPCDEIEQFLDRCYSVLIQAWVMVCKCMTAYDQPAGSADRRFAKYQQQGRLEARYMLQPEAQRLIQTAIRKSLVVRQYLTFELQLARRQGLLSNRYYAMVGDIGKYIENSGLTAFFLTLKYALGTKWSPLSLAAFTGELTKLRSLMMLYRDIGEQARYLALLEAPQIMDFAPGGYPLIFSYAMGVGSVLDVQMRNYTYARPFLNGYYFQIGVETARRQQGTVDNRVADDLGLTPEQRNEVTQLVDRLARGRGAGIPGGPVNPFVPPVQQQQPAAVYADIPALEESDDDGDEDGGAGFQNGVQVPAVRQGGQTDFRAQPLQDPIQAQLFMPLYPQVSNIPNNRIIRSIASGGWKTKIYYDTTRMVILNKMQGANTETLSQTIPIKTHSCKWATGMSKSLT.

The tract at residues 1 to 398 (MSSVLKAFER…EQRNEVTQLV (398 aa)) is p protein-binding. The RNA site is built by lysine 180, arginine 195, tyrosine 260, tyrosine 350, and arginine 354. Positions 405-553 (RGAGIPGGPV…WATGMSKSLT (149 aa)) are ntail. A Phosphoserine modification is found at serine 439.

This sequence belongs to the paramyxoviruses nucleocapsid family. As to quaternary structure, homomultimer; forms the nucleocapsid. Binds to the viral genomic RNA. N0 interacts with the phosphoprotein (via N-terminus); this interaction allows P to chaperon N0 to avoid N polymerization before encapsidation. Interacts (via N-terminus) as N-RNA template with the phosphoprotein (via C-terminus); this interaction positions the polymerase on the template.

The protein resides in the virion. It is found in the host cytoplasm. Forms the helical nucleocapsid (NC) with 12.71 N subunits per helical turn and a rise of 5.3 Angstrom per N subunit, protecting the genome from nucleases. The encapsidated genomic RNA serves as template for transcription and replication; encapsidation by N is coupled to RNA synthesis. Forms the encapsidation complex with the phosphoprotein protein P. Before encapsidation, the newly synthesized free N protein, so-called N0, is chaperoned by P. This Homo sapiens (Human) protein is Nucleoprotein (N).